Reading from the N-terminus, the 183-residue chain is Protein jagunal homolog 1 (183 aa).

The Cytoplasmic portion of the chain corresponds to 1–39 (MASRAGPRAAGTDGSDFQHRERVAMHYQMSVTLKYEIKK). Phosphoserine is present on Ser3. A helical transmembrane segment spans residues 40-60 (LIYVHLVIWLLLVAKMSVGHL). At 61 to 71 (RLLSHDQVAMP) the chain is on the lumenal side. The chain crosses the membrane as a helical span at residues 72–92 (YQWEYPYLLSILPSLLGLLSF). Over 93 to 96 (PRNN) the chain is Cytoplasmic. A helical membrane pass occupies residues 97 to 117 (ISYLVLSMISMGLFSIAPLIY). At 118–137 (GSMEMFPAAQQLYRHGKAYR) the chain is on the lumenal side. A helical membrane pass occupies residues 138 to 158 (FLFGFSAVSIMYLVLVLAVQV). Residues 159–183 (HAWQLYYSKKLLDSWFTSTQEKKHK) are Cytoplasmic-facing.

It belongs to the jagunal family. In terms of assembly, interacts with COPA, COPB2 and COPG2. Ubiquitously expressed.

The protein localises to the endoplasmic reticulum membrane. Its function is as follows. Endoplasmic reticulum transmembrane protein involved in vesicle-mediated transport, which is required for neutrophil function. Required for vesicle-mediated transport; it is however unclear whether it is involved in early secretory pathway or intracellular protein transport. Acts as a regulator of neutrophil function, probably via its role in vesicle-mediated transport: required for defense against fungal pathogens and for granulocyte colony-stimulating factor (GM-CSF) signaling pathway; possibly by regulating glycosylation and/or targeting of proteins contributing to the viability and migration of neutrophils. The sequence is that of Protein jagunal homolog 1 from Homo sapiens (Human).